The following is a 169-amino-acid chain: U3 small nucleolar ribonucleoprotein protein imp3 (169 aa).

An S4 RNA-binding domain is found at Arg109–Ile166.

This sequence belongs to the universal ribosomal protein uS4 family. Component of a heterotrimeric complex containing imp3, imp4 and mpp10.

It localises to the nucleus. The protein resides in the nucleolus. Its function is as follows. Component of the U3 small nucleolar ribonucleoprotein. Required for the early cleavages at sites A0, A1 and A2 during 18S ribosomal pre-RNA processing. The sequence is that of U3 small nucleolar ribonucleoprotein protein imp3 (RBP) from Pneumocystis carinii.